A 449-amino-acid polypeptide reads, in one-letter code: UDP-N-acetylmuramoylalanine--D-glutamate ligase (449 aa).

118-124 provides a ligand contact to ATP; that stretch reads GTNGKTT.

It belongs to the MurCDEF family.

The protein resides in the cytoplasm. The enzyme catalyses UDP-N-acetyl-alpha-D-muramoyl-L-alanine + D-glutamate + ATP = UDP-N-acetyl-alpha-D-muramoyl-L-alanyl-D-glutamate + ADP + phosphate + H(+). Its pathway is cell wall biogenesis; peptidoglycan biosynthesis. Cell wall formation. Catalyzes the addition of glutamate to the nucleotide precursor UDP-N-acetylmuramoyl-L-alanine (UMA). In Staphylococcus carnosus (strain TM300), this protein is UDP-N-acetylmuramoylalanine--D-glutamate ligase.